A 183-amino-acid polypeptide reads, in one-letter code: Adenine phosphoribosyltransferase (183 aa).

This sequence belongs to the purine/pyrimidine phosphoribosyltransferase family. As to quaternary structure, homodimer.

The protein localises to the cytoplasm. The catalysed reaction is AMP + diphosphate = 5-phospho-alpha-D-ribose 1-diphosphate + adenine. The protein operates within purine metabolism; AMP biosynthesis via salvage pathway; AMP from adenine: step 1/1. Catalyzes a salvage reaction resulting in the formation of AMP, that is energically less costly than de novo synthesis. The protein is Adenine phosphoribosyltransferase of Shewanella pealeana (strain ATCC 700345 / ANG-SQ1).